A 225-amino-acid polypeptide reads, in one-letter code: UPF0758 protein BP1235 (225 aa).

The MPN domain maps to 103–225 (ALANPDLVRR…TVSMAAQGHL (123 aa)). 3 residues coordinate Zn(2+): H174, H176, and D187. Positions 174 to 187 (HNHPGGTAAASAAD) match the JAMM motif motif.

It belongs to the UPF0758 family.

The chain is UPF0758 protein BP1235 from Bordetella pertussis (strain Tohama I / ATCC BAA-589 / NCTC 13251).